Here is a 115-residue protein sequence, read N- to C-terminus: MTDISEKLDPLVDYIMKNCLWQFNSRGWDRLKQNAGILSQTCEILCGEEPVHETAMDRCYWVDAVILSRAYKARFPWLMAMTKPEIKSLFKALHEKIDHLTVHGSLNTELTVPHY.

Hexamer of two alpha, two beta, and two delta chains. Iron-sulfur cluster is required as a cofactor.

It carries out the reaction N2 + 8 reduced [2Fe-2S]-[ferredoxin] + 16 ATP + 16 H2O = H2 + 8 oxidized [2Fe-2S]-[ferredoxin] + 2 NH4(+) + 16 ADP + 16 phosphate + 6 H(+). Functionally, the key enzymatic reactions in nitrogen fixation are catalyzed by the nitrogenase complex, which has 2 components: the iron protein (component 2) and a component 1 which is either a molybdenum-iron protein, a vanadium-iron, or an iron-iron protein. The polypeptide is Nitrogenase iron-iron protein delta chain (anfG) (Rhodobacter capsulatus (Rhodopseudomonas capsulata)).